Here is a 110-residue protein sequence, read N- to C-terminus: Protein RnfH (110 aa).

Residues 86–110 (RKRAAQQAKDQEEKKKAEKSANKEN) form a disordered region. Residues 94–110 (KDQEEKKKAEKSANKEN) are compositionally biased toward basic and acidic residues.

It belongs to the UPF0125 (RnfH) family.

The polypeptide is Protein RnfH (Mannheimia succiniciproducens (strain KCTC 0769BP / MBEL55E)).